The following is a 309-amino-acid chain: Serine/threonine-protein phosphatase 2A catalytic subunit beta isoform (309 aa).

Positions 57, 59, 85, and 117 each coordinate Mn(2+). Residue His118 is the Proton donor of the active site. Mn(2+) contacts are provided by His167 and His241. Tyr307 carries the post-translational modification Phosphotyrosine. Leu309 carries the post-translational modification Leucine methyl ester.

It belongs to the PPP phosphatase family. PP-1 subfamily. Found in a complex with at least ARL2, PPP2CB, PPP2R1A, PPP2R2A, PPP2R5E and TBCD. Interacts with TBCD. PP2A consists of a common heterodimeric core enzyme (composed of a 36 kDa catalytic subunit (subunit C) and a 65 kDa constant regulatory subunit (PR65) (subunit A)) that associates with a variety of regulatory subunits. Proteins that associate with the core dimer include three families of regulatory subunits B (the R2/B/PR55/B55, R3/B''/PR72/PR130/PR59 and R5/B'/B56 families), the 48 kDa variable regulatory subunit, viral proteins, and cell signaling molecules. Binds PPME1. May indirectly interact with SGO1, most probably through regulatory B56 subunits. Interacts with CTTNBP2NL. Interacts with PTPA. Part of the core of STRIPAK complexes composed of PP2A catalytic and scaffolding subunits, the striatins (PP2A regulatory subunits), the striatin-associated proteins MOB4, STRIP1 and STRIP2, PDCD10 and members of the STE20 kinases, such as STK24 and STK26. Mn(2+) serves as cofactor. Post-translationally, reversibly methyl esterified on Leu-309 by leucine carboxyl methyltransferase 1 (Lcmt1) and protein phosphatase methylesterase 1 (PPME1). Carboxyl methylation influences the affinity of the catalytic subunit for the different regulatory subunits, thereby modulating the PP2A holoenzyme's substrate specificity, enzyme activity and cellular localization. In terms of processing, phosphorylation of either threonine (by autophosphorylation-activated protein kinase) or tyrosine results in inactivation of the phosphatase. Auto-dephosphorylation has been suggested as a mechanism for reactivation. May be monoubiquitinated by NOSIP.

Its subcellular location is the cytoplasm. It is found in the nucleus. The protein resides in the chromosome. The protein localises to the centromere. It localises to the cytoskeleton. Its subcellular location is the spindle pole. It catalyses the reaction O-phospho-L-seryl-[protein] + H2O = L-seryl-[protein] + phosphate. The enzyme catalyses O-phospho-L-threonyl-[protein] + H2O = L-threonyl-[protein] + phosphate. Its function is as follows. Catalytic subunit of protein phosphatase 2A (PP2A), a serine/threonine phosphatase involved in the regulation of a wide variety of enzymes, signal transduction pathways, and cellular events. PP2A can modulate the activity of phosphorylase B kinase, casein kinase 2, mitogen-stimulated S6 kinase, and MAP-2 kinase. Part of the striatin-interacting phosphatase and kinase (STRIPAK) complexes. STRIPAK complexes have critical roles in protein (de)phosphorylation and are regulators of multiple signaling pathways including Hippo, MAPK, nuclear receptor and cytoskeleton remodeling. Different types of STRIPAK complexes are involved in a variety of biological processes such as cell growth, differentiation, apoptosis, metabolism and immune regulation. The protein is Serine/threonine-protein phosphatase 2A catalytic subunit beta isoform (PPP2CB) of Oryctolagus cuniculus (Rabbit).